The following is a 66-amino-acid chain: Large ribosomal subunit protein bL33c (66 aa).

This sequence belongs to the bacterial ribosomal protein bL33 family.

The protein localises to the plastid. It localises to the chloroplast. The protein is Large ribosomal subunit protein bL33c of Glycine max (Soybean).